The chain runs to 260 residues: Flap endonuclease Xni (260 aa).

Asp104 lines the Mg(2+) pocket. One can recognise a 5'-3' exonuclease domain in the interval 160-250 (VSPQQLTDYW…NGNLQQLRLP (91 aa)). Positions 171, 172, 180, 182, and 185 each coordinate K(+). An interaction with DNA region spans residues 184–189 (GIGPKS).

This sequence belongs to the Xni family. Requires Mg(2+) as cofactor. It depends on K(+) as a cofactor.

Its function is as follows. Has flap endonuclease activity. During DNA replication, flap endonucleases cleave the 5'-overhanging flap structure that is generated by displacement synthesis when DNA polymerase encounters the 5'-end of a downstream Okazaki fragment. The polypeptide is Flap endonuclease Xni (Pectobacterium atrosepticum (strain SCRI 1043 / ATCC BAA-672) (Erwinia carotovora subsp. atroseptica)).